The primary structure comprises 343 residues: Anthranilate phosphoribosyltransferase (343 aa).

5-phospho-alpha-D-ribose 1-diphosphate is bound by residues Gly84, 87–88, Thr92, 94–97, 112–120, and Ser124; these read GD, NIST, and KHGNRGVSS. Residue Gly84 participates in anthranilate binding. Ser96 serves as a coordination point for Mg(2+). Asn115 is a binding site for anthranilate. Arg170 lines the anthranilate pocket. Mg(2+) contacts are provided by Asp229 and Glu230.

The protein belongs to the anthranilate phosphoribosyltransferase family. In terms of assembly, homodimer. The cofactor is Mg(2+).

It carries out the reaction N-(5-phospho-beta-D-ribosyl)anthranilate + diphosphate = 5-phospho-alpha-D-ribose 1-diphosphate + anthranilate. It functions in the pathway amino-acid biosynthesis; L-tryptophan biosynthesis; L-tryptophan from chorismate: step 2/5. Functionally, catalyzes the transfer of the phosphoribosyl group of 5-phosphorylribose-1-pyrophosphate (PRPP) to anthranilate to yield N-(5'-phosphoribosyl)-anthranilate (PRA). In Burkholderia ambifaria (strain ATCC BAA-244 / DSM 16087 / CCUG 44356 / LMG 19182 / AMMD) (Burkholderia cepacia (strain AMMD)), this protein is Anthranilate phosphoribosyltransferase.